We begin with the raw amino-acid sequence, 129 residues long: uncharacterized protein (129 aa).

A helical transmembrane segment spans residues 8–24 (YLILFITIIAICSLFRI).

It is found in the membrane. This is an uncharacterized protein from Rickettsia prowazekii (strain Madrid E).